Consider the following 304-residue polypeptide: tRNA pseudouridine synthase B (304 aa).

Catalysis depends on Asp-38, which acts as the Nucleophile.

This sequence belongs to the pseudouridine synthase TruB family. Type 1 subfamily.

The enzyme catalyses uridine(55) in tRNA = pseudouridine(55) in tRNA. Functionally, responsible for synthesis of pseudouridine from uracil-55 in the psi GC loop of transfer RNAs. This chain is tRNA pseudouridine synthase B, found in Listeria monocytogenes serovar 1/2a (strain ATCC BAA-679 / EGD-e).